We begin with the raw amino-acid sequence, 222 residues long: NAD(P)H-hydrate epimerase (222 aa).

The YjeF N-terminal domain maps to 9-209 (MQQIDSYTIE…DIGLRLPEDF (201 aa)). 57–61 (NNGAD) is a (6S)-NADPHX binding site. The K(+) site is built by N58 and D119. (6S)-NADPHX contacts are provided by residues 123–129 (GVGLNNT) and D152. Residue T155 coordinates K(+).

It belongs to the NnrE/AIBP family. The cofactor is K(+).

It catalyses the reaction (6R)-NADHX = (6S)-NADHX. The enzyme catalyses (6R)-NADPHX = (6S)-NADPHX. Its function is as follows. Catalyzes the epimerization of the S- and R-forms of NAD(P)HX, a damaged form of NAD(P)H that is a result of enzymatic or heat-dependent hydration. This is a prerequisite for the S-specific NAD(P)H-hydrate dehydratase to allow the repair of both epimers of NAD(P)HX. The sequence is that of NAD(P)H-hydrate epimerase from Leuconostoc citreum (strain KM20).